The primary structure comprises 291 residues: 4-diphosphocytidyl-2-C-methyl-D-erythritol kinase (291 aa).

Residue lysine 11 is part of the active site. 95–105 (PVAAGMAGGSS) provides a ligand contact to ATP. The active site involves aspartate 137.

This sequence belongs to the GHMP kinase family. IspE subfamily.

It carries out the reaction 4-CDP-2-C-methyl-D-erythritol + ATP = 4-CDP-2-C-methyl-D-erythritol 2-phosphate + ADP + H(+). It participates in isoprenoid biosynthesis; isopentenyl diphosphate biosynthesis via DXP pathway; isopentenyl diphosphate from 1-deoxy-D-xylulose 5-phosphate: step 3/6. In terms of biological role, catalyzes the phosphorylation of the position 2 hydroxy group of 4-diphosphocytidyl-2C-methyl-D-erythritol. In Lachnoclostridium phytofermentans (strain ATCC 700394 / DSM 18823 / ISDg) (Clostridium phytofermentans), this protein is 4-diphosphocytidyl-2-C-methyl-D-erythritol kinase.